Consider the following 933-residue polypeptide: Protein inturned (933 aa).

The segment at 1 to 54 (MASLPLCGSVRSPEGLPGDPSSQEDRQDYDPEDPVSGSGSYSPTSTDSNDLEPE) is disordered. Polar residues predominate over residues 37–48 (GSGSYSPTSTDS). Residues 186–264 (LVGIIHQTKW…PMQVKLTFEN (79 aa)) enclose the PDZ domain. Ser675 carries the post-translational modification Phosphoserine. The tract at residues 703–742 (LKTRKPSPSRSGGPDSGLEGEGVGLSPHTTESQGSHGSEE) is disordered. The segment covering 710 to 719 (PSRSGGPDSG) has biased composition (low complexity). Over residues 729–738 (PHTTESQGSH) the composition is skewed to polar residues.

Belongs to the inturned family. As to quaternary structure, component of the CPLANE (ciliogenesis and planar polarity effectors) complex, composed of INTU, FUZ and WDPCP. Interacts with CPLANE1. Interacts with NPHP4 and DAAM1; INTU is mediating the interaction between NPHP4 and DAAM1.

Its subcellular location is the cytoplasm. The protein localises to the cell surface. It localises to the cytoskeleton. The protein resides in the cilium basal body. It is found in the microtubule organizing center. Its subcellular location is the centrosome. The protein localises to the centriole. Functionally, plays a key role in ciliogenesis and embryonic development. Regulator of cilia formation by controlling the organization of the apical actin cytoskeleton and the positioning of the basal bodies at the apical cell surface, which in turn is essential for the normal orientation of elongating ciliary microtubules. Plays a key role in definition of cell polarity via its role in ciliogenesis but not via conversion extension. Has an indirect effect on hedgehog signaling. Proposed to function as core component of the CPLANE (ciliogenesis and planar polarity effectors) complex involved in the recruitment of peripheral IFT-A proteins to basal bodies. Required for recruitment of CPLANE2 to the mother centriole. Binds phosphatidylinositol 3-phosphate with highest affinity, followed by phosphatidylinositol 4-phosphate and phosphatidylinositol 5-phosphate. The protein is Protein inturned (INTU) of Bos taurus (Bovine).